A 369-amino-acid chain; its full sequence is Peptide chain release factor 2 (369 aa).

N5-methylglutamine is present on Q249.

It belongs to the prokaryotic/mitochondrial release factor family. Methylated by PrmC. Methylation increases the termination efficiency of RF2.

The protein resides in the cytoplasm. Functionally, peptide chain release factor 2 directs the termination of translation in response to the peptide chain termination codons UGA and UAA. This Corynebacterium diphtheriae (strain ATCC 700971 / NCTC 13129 / Biotype gravis) protein is Peptide chain release factor 2.